Consider the following 207-residue polypeptide: Ribosomal RNA small subunit methyltransferase G (207 aa).

S-adenosyl-L-methionine is bound by residues glycine 77, phenylalanine 82, 100–102 (ERS), and arginine 141.

Belongs to the methyltransferase superfamily. RNA methyltransferase RsmG family.

It localises to the cytoplasm. In terms of biological role, specifically methylates the N7 position of a guanine in 16S rRNA. In Borrelia turicatae (strain 91E135), this protein is Ribosomal RNA small subunit methyltransferase G.